A 482-amino-acid polypeptide reads, in one-letter code: Protein farnesyltransferase subunit beta (482 aa).

PFTB repeat units lie at residues 131–172 (ESNA…VTLG), 182–223 (REKM…SILN), 230–271 (TQGL…ILIN), and 278–319 (LDSL…VLLQ). (2E,6E)-farnesyl diphosphate is bound by residues 256–259 (HGGY) and 298–301 (RTNK). Zn(2+)-binding residues include Asp-304 and Cys-306. (2E,6E)-farnesyl diphosphate is bound at residue 307–310 (YTFW). Positions 329 to 372 (VHGSSHISEGTNEEHHAHDEDDLEDSDDDDDSDEDNDEDSVNGH) are disordered. Positions 348 to 368 (EDDLEDSDDDDDSDEDNDEDS) are enriched in acidic residues. The stretch at 391-433 (SLGLQRYVLLCSKIPDGGFRDKPRKPRDFYHTCYCLSGLSVAQ) is one PFTB 5 repeat. His-421 is a Zn(2+) binding site.

The protein belongs to the protein prenyltransferase subunit beta family. In terms of assembly, heterodimer of FTA and FTB (farnesyltransferase). Heterodimer of an alpha and a beta subunit. Zn(2+) serves as cofactor.

It catalyses the reaction L-cysteinyl-[protein] + (2E,6E)-farnesyl diphosphate = S-(2E,6E)-farnesyl-L-cysteinyl-[protein] + diphosphate. Functionally, catalyzes the transfer of a farnesyl moiety from farnesyl diphosphate to a cysteine at the fourth position from the C-terminus of several proteins having the C-terminal sequence Cys-aliphatic-aliphatic-X (CaaX). The beta subunit is responsible for peptide-binding. Acts as an abscisic acid (ABA) negative regulator by mediating ASG2 farnesylation and consequently monitoring its subcellular localization. Involved in responses to salt (NaCl) and osmotic (e.g. in response to mannitol and PEG) stresses. In Arabidopsis thaliana (Mouse-ear cress), this protein is Protein farnesyltransferase subunit beta (FTB).